A 352-amino-acid chain; its full sequence is Phenylalanine--tRNA ligase alpha subunit (352 aa).

Glutamate 258 provides a ligand contact to Mg(2+).

It belongs to the class-II aminoacyl-tRNA synthetase family. Phe-tRNA synthetase alpha subunit type 1 subfamily. Tetramer of two alpha and two beta subunits. Requires Mg(2+) as cofactor.

The protein resides in the cytoplasm. The catalysed reaction is tRNA(Phe) + L-phenylalanine + ATP = L-phenylalanyl-tRNA(Phe) + AMP + diphosphate + H(+). The polypeptide is Phenylalanine--tRNA ligase alpha subunit (Staphylococcus saprophyticus subsp. saprophyticus (strain ATCC 15305 / DSM 20229 / NCIMB 8711 / NCTC 7292 / S-41)).